A 369-amino-acid polypeptide reads, in one-letter code: ATP-dependent (S)-NAD(P)H-hydrate dehydratase (369 aa).

Positions 14 to 356 constitute a YjeF C-terminal domain; that stretch reads LFQKARKLVP…DEVHESFLTL (343 aa). (6S)-NADPHX-binding positions include Gly126 and 179 to 185; that span reads NVNEFSR. Residues 231–235 and 250–259 each bind ATP; these read KGPHD and GGLKRSGGQG. Asp260 serves as a coordination point for (6S)-NADPHX. Residues 284 to 306 show a composition bias toward basic and acidic residues; it reads GEQEHSKEAENKEEVQGELESNK. Residues 284–307 form a disordered region; it reads GEQEHSKEAENKEEVQGELESNKR.

Belongs to the NnrD/CARKD family. The cofactor is Mg(2+).

The protein resides in the cytoplasm. The catalysed reaction is (6S)-NADHX + ATP = ADP + phosphate + NADH + H(+). It carries out the reaction (6S)-NADPHX + ATP = ADP + phosphate + NADPH + H(+). In terms of biological role, catalyzes the dehydration of the S-form of NAD(P)HX at the expense of ATP, which is converted to ADP. Together with NAD(P)HX epimerase, which catalyzes the epimerization of the S- and R-forms, the enzyme allows the repair of both epimers of NAD(P)HX, a damaged form of NAD(P)H that is a result of enzymatic or heat-dependent hydration. This is ATP-dependent (S)-NAD(P)H-hydrate dehydratase from Emericella nidulans (strain FGSC A4 / ATCC 38163 / CBS 112.46 / NRRL 194 / M139) (Aspergillus nidulans).